The following is a 211-amino-acid chain: Thymidylate kinase (211 aa).

7-14 is a binding site for ATP; that stretch reads GIDASGKS.

It belongs to the thymidylate kinase family.

The enzyme catalyses dTMP + ATP = dTDP + ADP. Its function is as follows. Phosphorylation of dTMP to form dTDP in both de novo and salvage pathways of dTTP synthesis. The sequence is that of Thymidylate kinase from Mesomycoplasma hyopneumoniae (strain 232) (Mycoplasma hyopneumoniae).